Reading from the N-terminus, the 1072-residue chain is Integrator complex subunit 3 homolog (1072 aa).

2 disordered regions span residues 920–941 (YPSS…STSI) and 1002–1072 (DTTV…NDSD). A phosphoserine mark is found at Ser1042, Ser1043, Ser1047, and Ser1048.

This sequence belongs to the Integrator subunit 3 family. In terms of assembly, belongs to the multiprotein complex Integrator, at least composed of IntS1, IntS2, IntS3, IntS4, omd/IntS5, IntS6, defl/IntS7, IntS8, IntS9, IntS10, IntS11, IntS12, asun/IntS13, IntS14 and IntS15. The core complex associates with protein phosphatase 2A subunits mts/PP2A and Pp2A-29B, to form the Integrator-PP2A (INTAC) complex.

The protein localises to the nucleus. It localises to the cytoplasm. Its function is as follows. Component of the integrator complex, a multiprotein complex that terminates RNA polymerase II (Pol II) transcription in the promoter-proximal region of genes. The integrator complex provides a quality checkpoint during transcription elongation by driving premature transcription termination of transcripts that are unfavorably configured for transcriptional elongation: the complex terminates transcription by (1) catalyzing dephosphorylation of the C-terminal domain (CTD) of Pol II subunit Polr2A/Rbp1 and Spt5, and (2) degrading the exiting nascent RNA transcript via endonuclease activity. The integrator complex is also involved in the 3'-end processing of the U7 snRNA, and also the spliceosomal snRNAs U1, U2, U4 and U5. The sequence is that of Integrator complex subunit 3 homolog (IntS3) from Drosophila erecta (Fruit fly).